We begin with the raw amino-acid sequence, 304 residues long: Glycine--tRNA ligase alpha subunit (304 aa).

The protein belongs to the class-II aminoacyl-tRNA synthetase family. As to quaternary structure, tetramer of two alpha and two beta subunits.

It localises to the cytoplasm. It carries out the reaction tRNA(Gly) + glycine + ATP = glycyl-tRNA(Gly) + AMP + diphosphate. This chain is Glycine--tRNA ligase alpha subunit, found in Yersinia enterocolitica serotype O:8 / biotype 1B (strain NCTC 13174 / 8081).